The chain runs to 115 residues: MRLYINEIKIKDDILYCYTEDSIKGLSEVGQMLVDSDNYAFAYTLDDGKAYAYLIFVQETWTMLHENMTKKIIINDELELTEFHQELTYILDNIKGNNNYGKEFVATVEETFDIE.

It belongs to the UPF0738 family.

The protein is UPF0738 protein SACOL1009 of Staphylococcus aureus (strain COL).